The chain runs to 2256 residues: GON-4-like protein (2256 aa).

Disordered stretches follow at residues 1–56 (MLPC…DSAG), 105–213 (PSLE…SLGP), and 227–266 (LFIP…MTYD). Positions 23 to 35 (EDLHLEAAVKPDT) are enriched in basic and acidic residues. Residues 40–53 (DCTSESLSWGQSHD) are compositionally biased toward polar residues. Positions 141 to 176 (TREDGGDHTVPEEPPSGEHAEEVKAEGGELEMHSEG) are enriched in basic and acidic residues. The segment covering 242-254 (RKKTKKGTKRKRD) has biased composition (basic residues). S346 is subject to Phosphoserine. The segment covering 366–395 (EDDDSSDEEYQPDEEEEDETAEESLLESDV) has biased composition (acidic residues). Disordered stretches follow at residues 366 to 428 (EDDD…VLSE), 441 to 460 (SAEV…QTRD), and 545 to 573 (DVEN…DTED). The segment covering 545-571 (DVENEDEADDDDDPEYNFLEDLDEPDT) has biased composition (acidic residues). Residues 609 to 1363 (EMGFSNMEDD…DCMEEISSDF (755 aa)) are required for interaction with YY1, SIN3A and HDAC1, and transcriptional repression activity. The residue at position 783 (S783) is a Phosphoserine. 2 stretches are compositionally biased toward low complexity: residues 947–959 (TAGG…TETS) and 1094–1115 (PWSE…LPSL). 4 disordered regions span residues 947-969 (TAGG…KTSP), 1078-1141 (AALP…SPCV), 1241-1288 (AEGK…EAVS), and 1360-1620 (SSDF…SRAR). Positions 1119–1135 (KFRKPYVRRKPTRRKGA) are enriched in basic residues. Positions 1364 to 1386 (PKQDIGEEVKEECCMELDRDSPQ) are enriched in basic and acidic residues. Polar residues-rich tracts occupy residues 1387–1401 (EKAS…QTAT) and 1429–1444 (LPQS…TVLN). Position 1445 is a phosphoserine (S1445). Over residues 1475 to 1495 (GAEEEEEEDFDDLTQDEEDEL) the composition is skewed to acidic residues. Residues 1496-1510 (SSASEESVLSVPELQ) show a composition bias toward low complexity. Residues 1529 to 1553 (GESEEENSQEENSEPEEEEEEEAEG) show a composition bias toward acidic residues. Residues 1606-1620 (RSSHRARSRRGSRAR) are compositionally biased toward basic residues. PAH domains are found at residues 1644-1716 (EQKD…LLPE) and 1726-1797 (EQQA…FDHL). Disordered regions lie at residues 1831–1886 (VEEE…LKKS) and 1909–1966 (LELV…APIP). The span at 1851–1868 (EIGVQHQDKESEWPEAAK) shows a compositional bias: basic and acidic residues. 2 positions are modified to phosphoserine: S1921 and S1994. 2 disordered regions span residues 2050 to 2078 (PETS…STRD) and 2110 to 2148 (IRGT…VLPK). Residues 2111–2129 (RGTSSGASASEAAPTASRE) show a composition bias toward low complexity. Residues 2163–2216 (STGEKVVLWTREADRVILTMCQEQGAQPHTFSVISQQLGNKTPVEVSHRFRELM) form the Myb-like domain. Positions 2223-2256 (CEASSEDEDDATSTSNADQLSDHGDLLSEEELDE) are disordered.

As to quaternary structure, found in a complex with YY1, SIN3A and HDAC1.

It localises to the nucleus. Has transcriptional repressor activity, probably as part of a complex with YY1, SIN3A and HDAC1. Required for B cell lymphopoiesis. This chain is GON-4-like protein (Gon4l), found in Rattus norvegicus (Rat).